The following is a 102-amino-acid chain: Protein isd11 (102 aa).

It belongs to the complex I LYR family.

Its subcellular location is the mitochondrion. Functionally, required for mitochondrial iron-sulfur (Fe-S) protein biosynthesis. This is Protein isd11 (isd11) from Schizosaccharomyces pombe (strain 972 / ATCC 24843) (Fission yeast).